A 288-amino-acid chain; its full sequence is Single myb histone 4 (288 aa).

Disordered stretches follow at residues 1–42 (MGAP…PVLS), 62–87 (GLGSSKLRVPKITGPSSSPSSSSQPL), and 181–206 (DSLATRTPAPMNASAPKQKDPSKPSK). The region spanning 1–60 (MGAPKQKWTSEEEDALRAGVRKHGAGKWRTIQKDPEFSPVLSSRSNIDLKDKWRNLSFSA) is the HTH myb-type domain. Residues 28–56 (WRTIQKDPEFSPVLSSRSNIDLKDKWRNL) constitute a DNA-binding region (H-T-H motif). The span at 76-87 (PSSSPSSSSQPL) shows a compositional bias: low complexity. In terms of domain architecture, H15 spans 113–181 (TLPKYGAMIM…KIDKSYRLPD (69 aa)). Positions 230–250 (KVADAEAKAHDAHDQTMEAER) form a coiled coil.

The protein belongs to the histone H1/H5 family. SMH subfamily. In terms of assembly, forms a homodimer and heterodimers.

The protein localises to the nucleus. Its subcellular location is the chromosome. It localises to the nucleolus. The protein resides in the telomere. Binds preferentially double-stranded telomeric repeats, but may also bind to the single telomeric strand. The polypeptide is Single myb histone 4 (SMH4) (Zea mays (Maize)).